The primary structure comprises 30 residues: GLKDMIKNLAKEAAVKLAGAVINKFSPQPQ.

In terms of tissue distribution, expressed by the skin glands.

The protein resides in the secreted. In terms of biological role, probably has antibacterial activity. This is Nattererin-1 from Physalaemus nattereri (Cuyaba dwarf frog).